The following is a 280-amino-acid chain: Ribosomal RNA small subunit methyltransferase A (280 aa).

The S-adenosyl-L-methionine site is built by asparagine 28, leucine 30, glycine 55, glutamate 77, aspartate 103, and asparagine 122.

Belongs to the class I-like SAM-binding methyltransferase superfamily. rRNA adenine N(6)-methyltransferase family. RsmA subfamily.

The protein resides in the cytoplasm. It catalyses the reaction adenosine(1518)/adenosine(1519) in 16S rRNA + 4 S-adenosyl-L-methionine = N(6)-dimethyladenosine(1518)/N(6)-dimethyladenosine(1519) in 16S rRNA + 4 S-adenosyl-L-homocysteine + 4 H(+). Its function is as follows. Specifically dimethylates two adjacent adenosines (A1518 and A1519) in the loop of a conserved hairpin near the 3'-end of 16S rRNA in the 30S particle. May play a critical role in biogenesis of 30S subunits. The sequence is that of Ribosomal RNA small subunit methyltransferase A from Ruegeria sp. (strain TM1040) (Silicibacter sp.).